The primary structure comprises 653 residues: Multidomain regulatory protein Rv1364c (653 aa).

Phosphothreonine; by PknD occurs at positions 54 and 81. In terms of domain architecture, PAC spans 86–142 (SGSEWRLQTDYDGSGVEERYFDFVVTPRRRADGSIEGVQLIVDDVTSRVRARQAAEA). Residues 177 to 396 (DIAAEYLVAA…DDVTLLAMQR (220 aa)) enclose the PPM-type phosphatase domain. Positions 211 and 212 each coordinate Mn(2+). T299 carries the post-translational modification Phosphothreonine; by PknD. Positions 328 and 387 each coordinate Mn(2+). Phosphothreonine; by PknD is present on T390. The tract at residues 397-544 (RAPTPPLHIT…TMVRRAAFQQ (148 aa)) is anti-sigma factor kinase region. Residue S506 is modified to Phosphoserine; by PknD. A phosphothreonine; by PknD mark is found at T520 and T568. One can recognise an STAS domain in the interval 546-653 (IDSEFVSLVE…ADTEDIFAQE (108 aa)). The residue at position 600 (S600) is a Phosphoserine; by autocatalysis.

Exists in solution as both monomer and dimer. Both the phosphorylated and unphosphorylated proteins form extended dimers. Interacts with SigF. Can efficiently bind to SigF independently of its autophosphorylation. Interaction between SigF and Rv1364c is reduced significantly upon the phosphorylation of both proteins by PknD. Requires Mn(2+) as cofactor. Mg(2+) serves as cofactor. Autophosphorylated. Phosphorylated by PknD on multiple threonine and serine residues. Phosphorylation is antagonized by the phosphatase activity.

The catalysed reaction is O-phospho-L-seryl-[protein] + H2O = L-seryl-[protein] + phosphate. It carries out the reaction O-phospho-L-threonyl-[protein] + H2O = L-threonyl-[protein] + phosphate. It catalyses the reaction L-seryl-[protein] + ATP = O-phospho-L-seryl-[protein] + ADP + H(+). The enzyme catalyses L-threonyl-[protein] + ATP = O-phospho-L-threonyl-[protein] + ADP + H(+). The phosphatase domain is activated by the anti-sigma factor kinase domain. In terms of biological role, primarily acts as an independent SigF regulator that is sensitive to the osmosensory signal, mediating the cross talk of PknD with the SigF regulon. Possesses both phosphatase and kinase activities. The kinase domain functions as a classic anti-sigma factor-like kinase to phosphorylate the anti-anti-sigma factor domain at the canonical regulatory site, and the phosphatase domain antagonizes this activity. This Mycobacterium tuberculosis (strain ATCC 25618 / H37Rv) protein is Multidomain regulatory protein Rv1364c.